We begin with the raw amino-acid sequence, 256 residues long: Ribonuclease 3 (256 aa).

Positions 3–125 constitute an RNase III domain; that stretch reads LEALQQRLGY…IFGAVFLDGG (123 aa). Glu38 is a binding site for Mg(2+). Residue Asp42 is part of the active site. The Mg(2+) site is built by Asp111 and Glu114. Glu114 is an active-site residue. One can recognise a DRBM domain in the interval 152–222; the sequence is DAKTLLQEYL…AKLALEEAHR (71 aa). The segment at 227 to 256 is disordered; it reads LVKRSRAERTGKTRKQATPPDPQLSLRLKE.

The protein belongs to the ribonuclease III family. In terms of assembly, homodimer. Mg(2+) is required as a cofactor.

The protein localises to the cytoplasm. It catalyses the reaction Endonucleolytic cleavage to 5'-phosphomonoester.. Digests double-stranded RNA. Involved in the processing of primary rRNA transcript to yield the immediate precursors to the large and small rRNAs (23S and 16S). Processes some mRNAs, and tRNAs when they are encoded in the rRNA operon. Processes pre-crRNA and tracrRNA of type II CRISPR loci if present in the organism. The polypeptide is Ribonuclease 3 (Ralstonia nicotianae (strain ATCC BAA-1114 / GMI1000) (Ralstonia solanacearum)).